A 125-amino-acid polypeptide reads, in one-letter code: Small ribosomal subunit protein uS12 (125 aa).

At Asp-89 the chain carries 3-methylthioaspartic acid.

This sequence belongs to the universal ribosomal protein uS12 family. As to quaternary structure, part of the 30S ribosomal subunit. Contacts proteins S8 and S17. May interact with IF1 in the 30S initiation complex.

With S4 and S5 plays an important role in translational accuracy. Functionally, interacts with and stabilizes bases of the 16S rRNA that are involved in tRNA selection in the A site and with the mRNA backbone. Located at the interface of the 30S and 50S subunits, it traverses the body of the 30S subunit contacting proteins on the other side and probably holding the rRNA structure together. The combined cluster of proteins S8, S12 and S17 appears to hold together the shoulder and platform of the 30S subunit. In Clostridium botulinum (strain Alaska E43 / Type E3), this protein is Small ribosomal subunit protein uS12.